The sequence spans 171 residues: Co-chaperone protein HscB (171 aa).

One can recognise a J domain in the interval 2–74; sequence DYFTFFGLPA…LMRAEYLLSL (73 aa).

Belongs to the HscB family. Interacts with HscA and stimulates its ATPase activity. Interacts with IscU.

In terms of biological role, co-chaperone involved in the maturation of iron-sulfur cluster-containing proteins. Seems to help targeting proteins to be folded toward HscA. In Shigella sonnei (strain Ss046), this protein is Co-chaperone protein HscB.